The following is a 292-amino-acid chain: NAD kinase (292 aa).

The Proton acceptor role is filled by D73. NAD(+)-binding positions include 73–74 (DG), 147–148 (NE), H158, R175, D177, 188–193 (TAYSLS), and Q247.

The protein belongs to the NAD kinase family. A divalent metal cation serves as cofactor.

Its subcellular location is the cytoplasm. The enzyme catalyses NAD(+) + ATP = ADP + NADP(+) + H(+). Functionally, involved in the regulation of the intracellular balance of NAD and NADP, and is a key enzyme in the biosynthesis of NADP. Catalyzes specifically the phosphorylation on 2'-hydroxyl of the adenosine moiety of NAD to yield NADP. This Sodalis glossinidius (strain morsitans) protein is NAD kinase.